Reading from the N-terminus, the 874-residue chain is GRB2-associated and regulator of MAPK protein 2 (874 aa).

The interval 12–339 (RWSMGAFPLD…LLAGDPRVER (328 aa)) is CABIT. The segment covering 188-206 (GGGGPASAGAAGGTGGGGA) has biased composition (gly residues). 5 disordered regions span residues 188–207 (GGGG…GGAR), 388–422 (PGLA…EPAA), 437–545 (GPEG…SPSP), 563–598 (GESS…AASL), and 625–742 (APFG…PSKA). Low complexity-rich tracts occupy residues 388–403 (PGLA…APAG) and 518–545 (SPSS…SPSP). Over residues 575-585 (PSTTQPSQASR) the composition is skewed to polar residues. Composition is skewed to low complexity over residues 632-650 (PFSG…SSGP) and 658-691 (ATSG…SSSS). Ser735 carries the phosphoserine modification. The SAM domain maps to 807–871 (SALSLEEVSR…KIMQFIKGWR (65 aa)).

This sequence belongs to the GAREM family.

Functionally, probable adapter protein that may provide a link between cell surface epidermal growth factor receptor and the MAPK/ERK signaling pathway. In Homo sapiens (Human), this protein is GRB2-associated and regulator of MAPK protein 2 (GAREM2).